The following is a 154-amino-acid chain: MDDHAYTKDLQPTVENLSKAVYTVNRHAKTAPNPKYLYLLKKRALQKLVKEGKGKKIGLHFSKNPRFSQQQSDVLISIGDYYFHMPPTKEDFEHLPHLGTLNQSYRNPKAQMSLTKAKHLLQEYVGMKEKPLVPNRQQPAYHKPVFKKLGESYF.

This is an uncharacterized protein from Bacillus subtilis (strain 168).